Consider the following 317-residue polypeptide: NADH-ubiquinone oxidoreductase chain 1 (317 aa).

A run of 9 helical transmembrane segments spans residues Tyr3–Ala23, Pro37–Leu57, Leu69–Ile89, Gly103–Trp123, Leu141–Thr161, Ala173–Ala193, Ser207–Leu227, Gly247–Val267, and Leu282–Leu302.

The protein belongs to the complex I subunit 1 family.

The protein localises to the mitochondrion inner membrane. The catalysed reaction is a ubiquinone + NADH + 5 H(+)(in) = a ubiquinol + NAD(+) + 4 H(+)(out). In terms of biological role, core subunit of the mitochondrial membrane respiratory chain NADH dehydrogenase (Complex I) that is believed to belong to the minimal assembly required for catalysis. Complex I functions in the transfer of electrons from NADH to the respiratory chain. The immediate electron acceptor for the enzyme is believed to be ubiquinone. In Candida albicans (strain SC5314 / ATCC MYA-2876) (Yeast), this protein is NADH-ubiquinone oxidoreductase chain 1 (NAD1).